We begin with the raw amino-acid sequence, 321 residues long: Probable endolytic peptidoglycan transglycosylase RlpA (321 aa).

Belongs to the RlpA family.

Its function is as follows. Lytic transglycosylase with a strong preference for naked glycan strands that lack stem peptides. The chain is Probable endolytic peptidoglycan transglycosylase RlpA from Synechocystis sp. (strain ATCC 27184 / PCC 6803 / Kazusa).